The primary structure comprises 374 residues: MGLLVFVRNLLLALCLFLVLGFLYYSAWKLHLLQWEDSNSLILSLDSAGQTLGTEYDRLGFLLKLDSKLPAELATKYANFSEGACKPGYASAMMTAIFPRFSKPAPMFLDDSFRKWARIREFVPPFGIKGQDNLIKAILSVTKEYRLTPALDSLHCRRCIIVGNGGVLANKSLGSRIDDYDIVIRLNSAPVKGFEKDVGSKTTLRITYPEGAMQRPEQYERDSLFVLAGFKWQDFKWLKYIVYKERVSASDGFWKSVATRVPKEPPEIRILNPYFIQEAAFTLIGLPFNNGLMGRGNIPTLGSVAVTMALDGCDEVAVAGFGYDMNTPNAPLHYYETVRMAAIKESWTHNIQREKEFLRKLVKARVITDLSSGI.

Over 1–8 (MGLLVFVR) the chain is Cytoplasmic. A helical; Signal-anchor for type II membrane protein membrane pass occupies residues 9 to 28 (NLLLALCLFLVLGFLYYSAW). The Lumenal portion of the chain corresponds to 29 to 374 (KLHLLQWEDS…RVITDLSSGI (346 aa)). Asn-79 and Asn-170 each carry an N-linked (GlcNAc...) asparagine glycan. Cys-159 and Cys-313 are joined by a disulfide.

The protein belongs to the glycosyltransferase 29 family. In terms of processing, the soluble form derives from the membrane form by proteolytic processing. Found in all tissues tested. High expression found in brain, liver, kidney, colon, heart and lung.

It is found in the golgi apparatus. The protein localises to the golgi stack membrane. It localises to the secreted. It carries out the reaction a beta-D-galactosyl-(1-&gt;4)-N-acetyl-beta-D-glucosaminyl derivative + CMP-N-acetyl-beta-neuraminate = an N-acetyl-alpha-neuraminyl-(2-&gt;3)-beta-D-galactosyl-(1-&gt;4)-N-acetyl-beta-D-glucosaminyl derivative + CMP + H(+). Its pathway is protein modification; protein glycosylation. Its function is as follows. Catalyzes the formation of the NeuAc-alpha-2,3-Gal-beta-1,4-GlcNAc-, NeuAc-alpha-2,3-Gal-beta-1,3-GlcNAc- and NeuAc-alpha-2,3-Gal-beta-1,3-GalNAc- sequences found in terminal carbohydrate groups of glycoproteins and glycolipids. The highest activity is toward Gal-beta-1,3-GlcNAc and the lowest toward Gal-beta-1,3-GalNAc. This is CMP-N-acetylneuraminate-beta-1,4-galactoside alpha-2,3-sialyltransferase (St3gal3) from Rattus norvegicus (Rat).